The sequence spans 296 residues: Putative S-adenosyl-L-methionine-dependent methyltransferase MAP_3881 (296 aa).

S-adenosyl-L-methionine contacts are provided by residues Asp-121 and 150–151 (DL).

The protein belongs to the UPF0677 family.

In terms of biological role, exhibits S-adenosyl-L-methionine-dependent methyltransferase activity. This Mycolicibacterium paratuberculosis (strain ATCC BAA-968 / K-10) (Mycobacterium paratuberculosis) protein is Putative S-adenosyl-L-methionine-dependent methyltransferase MAP_3881.